Consider the following 323-residue polypeptide: Elongation factor P--(R)-beta-lysine ligase (323 aa).

74 to 76 (SPE) contacts substrate. ATP is bound by residues 98–100 (RNE) and Asn107. Substrate is bound at residue Tyr116. Residue 242–243 (EL) coordinates ATP. Position 249 (Glu249) interacts with substrate. Gly298 serves as a coordination point for ATP.

It belongs to the class-II aminoacyl-tRNA synthetase family. EpmA subfamily. In terms of assembly, homodimer.

The catalysed reaction is D-beta-lysine + L-lysyl-[protein] + ATP = N(6)-((3R)-3,6-diaminohexanoyl)-L-lysyl-[protein] + AMP + diphosphate + H(+). In terms of biological role, with EpmB is involved in the beta-lysylation step of the post-translational modification of translation elongation factor P (EF-P). Catalyzes the ATP-dependent activation of (R)-beta-lysine produced by EpmB, forming a lysyl-adenylate, from which the beta-lysyl moiety is then transferred to the epsilon-amino group of a conserved specific lysine residue in EF-P. The sequence is that of Elongation factor P--(R)-beta-lysine ligase from Photobacterium profundum (strain SS9).